A 134-amino-acid chain; its full sequence is Transcription antitermination protein NusB (134 aa).

This sequence belongs to the NusB family.

Its function is as follows. Involved in transcription antitermination. Required for transcription of ribosomal RNA (rRNA) genes. Binds specifically to the boxA antiterminator sequence of the ribosomal RNA (rrn) operons. This is Transcription antitermination protein NusB from Shewanella woodyi (strain ATCC 51908 / MS32).